Consider the following 659-residue polypeptide: Methionine--tRNA ligase (659 aa).

The short motif at 13–23 (YYPSGNLHIGH) is the 'HIGH' region element. The 'KMSKS' region signature appears at 308–312 (KMSKS). K311 contributes to the ATP binding site. The region spanning 559-659 (DFDKVEIKAA…SAIPNGAVIK (101 aa)) is the tRNA-binding domain.

It belongs to the class-I aminoacyl-tRNA synthetase family. MetG type 2B subfamily. Homodimer.

It is found in the cytoplasm. The catalysed reaction is tRNA(Met) + L-methionine + ATP = L-methionyl-tRNA(Met) + AMP + diphosphate. Functionally, is required not only for elongation of protein synthesis but also for the initiation of all mRNA translation through initiator tRNA(fMet) aminoacylation. This chain is Methionine--tRNA ligase, found in Staphylococcus haemolyticus (strain JCSC1435).